A 221-amino-acid polypeptide reads, in one-letter code: Endo-1,4-beta-xylanase I (221 aa).

The N-terminal stretch at 1–30 (MVSFTSIITAAVAATGALAAPATDVSLVAR) is a signal peptide. One can recognise a GH11 domain in the interval 31-219 (QNTPNGEGTH…STGNAQITVN (189 aa)). Glu115 (nucleophile) is an active-site residue. Positions 126-157 (DPSSQSQNKGTVTSDGSSYKIAQSTRTNQPSI) are disordered. Catalysis depends on Glu206, which acts as the Proton donor.

This sequence belongs to the glycosyl hydrolase 11 (cellulase G) family. In terms of processing, the N-terminus is blocked.

The protein localises to the secreted. It carries out the reaction Endohydrolysis of (1-&gt;4)-beta-D-xylosidic linkages in xylans.. It participates in glycan degradation; xylan degradation. Major xylan-degrading enzyme. Contributes to the hydrolysis of arabinoxylan, the major component of maize cell-walls. The polypeptide is Endo-1,4-beta-xylanase I (XYL1) (Cochliobolus carbonum (Maize leaf spot fungus)).